Consider the following 147-residue polypeptide: DNA-directed RNA polymerase subunit 6 homolog (147 aa).

Belongs to the archaeal RpoK/eukaryotic RPB6 RNA polymerase subunit family. In terms of assembly, part of the viral DNA-directed RNA polymerase that consists of 8 polII-like subunits (RPB1, RPB2, RPB3, RPB5, RPB6, RPB7, RPB9, RPB10), a capping enzyme and a termination factor.

The protein localises to the host cytoplasm. It localises to the virion. Functionally, component of the DNA-directed RNA polymerase (RNAP) that catalyzes the transcription in the cytoplasm of viral DNA into RNA using the four ribonucleoside triphosphates as substrates. The sequence is that of DNA-directed RNA polymerase subunit 6 homolog from Ornithodoros (relapsing fever ticks).